A 78-amino-acid chain; its full sequence is Major outer membrane lipoprotein Lpp (78 aa).

An N-terminal signal peptide occupies residues 1-20 (MNRTKIVLGAVVLASTLLAG). C21 carries the N-palmitoyl cysteine lipid modification. A lipid anchor (S-diacylglycerol cysteine) is attached at C21. Repeats lie at residues 24 to 34 (TAKVDQLTSDI) and 38 to 48 (NAKVDQLSNDV). Residues 27–75 (VDQLTSDIQTLNAKVDQLSNDVNAVHTDVQAAKDDAARANQRLDNQVRS) adopt a coiled-coil conformation. Residue K78 is modified to N6-murein peptidoglycan lysine.

Belongs to the Lpp family. In terms of assembly, homotrimer.

The protein resides in the cell outer membrane. The protein localises to the secreted. Its subcellular location is the cell wall. A highly abundant outer membrane lipoprotein that controls the distance between the inner and outer membranes. The only protein known to be covalently linked to the peptidoglycan network (PGN). Also non-covalently binds the PGN. The link between the cell outer membrane and PGN contributes to maintenance of the structural and functional integrity of the cell envelope, and maintains the correct distance between the PGN and the outer membrane. In Photorhabdus laumondii subsp. laumondii (strain DSM 15139 / CIP 105565 / TT01) (Photorhabdus luminescens subsp. laumondii), this protein is Major outer membrane lipoprotein Lpp.